A 312-amino-acid polypeptide reads, in one-letter code: Ribosomal RNA small subunit methyltransferase H (312 aa).

Residues 33-35 (GGH), aspartate 53, phenylalanine 80, aspartate 101, and glutamine 108 each bind S-adenosyl-L-methionine.

This sequence belongs to the methyltransferase superfamily. RsmH family.

Its subcellular location is the cytoplasm. The catalysed reaction is cytidine(1402) in 16S rRNA + S-adenosyl-L-methionine = N(4)-methylcytidine(1402) in 16S rRNA + S-adenosyl-L-homocysteine + H(+). Specifically methylates the N4 position of cytidine in position 1402 (C1402) of 16S rRNA. The chain is Ribosomal RNA small subunit methyltransferase H from Desulfosudis oleivorans (strain DSM 6200 / JCM 39069 / Hxd3) (Desulfococcus oleovorans).